Reading from the N-terminus, the 231-residue chain is Uracil phosphoribosyltransferase (231 aa).

Residue 38–42 participates in GTP binding; sequence KGLVR. Residues Arg87, Arg112, and 140 to 148 each bind 5-phospho-alpha-D-ribose 1-diphosphate; that span reads DPMIATGST. Residues Ile203 and 208–210 each bind uracil; that span reads GDA. Asp209 is a 5-phospho-alpha-D-ribose 1-diphosphate binding site.

It belongs to the UPRTase family. Mg(2+) serves as cofactor.

The enzyme catalyses UMP + diphosphate = 5-phospho-alpha-D-ribose 1-diphosphate + uracil. Its pathway is pyrimidine metabolism; UMP biosynthesis via salvage pathway; UMP from uracil: step 1/1. Allosterically activated by GTP. In terms of biological role, catalyzes the conversion of uracil and 5-phospho-alpha-D-ribose 1-diphosphate (PRPP) to UMP and diphosphate. The chain is Uracil phosphoribosyltransferase from Methanococcus maripaludis (strain C7 / ATCC BAA-1331).